A 336-amino-acid polypeptide reads, in one-letter code: F-box protein At5g50450 (336 aa).

The region spanning 19–70 is the F-box domain; the sequence is NNHFEDLHDDLIISILRKLATSASSPSDFLTVLSTCKRLNRLGLHPLVLSKA. Positions 263, 266, 279, 282, 288, 292, 301, and 305 each coordinate Zn(2+). An MYND-type; atypical zinc finger spans residues 263-305; it reads HGGCGRPETRAHEFRRCSVCGKVNYCSRGCQALDWRAKHKVEC.

The polypeptide is F-box protein At5g50450 (Arabidopsis thaliana (Mouse-ear cress)).